Consider the following 487-residue polypeptide: Protein nucleotidyltransferase YdiU (487 aa).

The ATP site is built by Gly-91, Gly-93, Arg-94, Lys-114, Asp-126, Gly-127, Arg-177, and Arg-184. Residue Asp-253 is the Proton acceptor of the active site. Asn-254 and Asp-263 together coordinate Mg(2+). Asp-263 lines the ATP pocket.

The protein belongs to the SELO family. Mg(2+) is required as a cofactor. Requires Mn(2+) as cofactor.

The catalysed reaction is L-seryl-[protein] + ATP = 3-O-(5'-adenylyl)-L-seryl-[protein] + diphosphate. It carries out the reaction L-threonyl-[protein] + ATP = 3-O-(5'-adenylyl)-L-threonyl-[protein] + diphosphate. The enzyme catalyses L-tyrosyl-[protein] + ATP = O-(5'-adenylyl)-L-tyrosyl-[protein] + diphosphate. It catalyses the reaction L-histidyl-[protein] + UTP = N(tele)-(5'-uridylyl)-L-histidyl-[protein] + diphosphate. The catalysed reaction is L-seryl-[protein] + UTP = O-(5'-uridylyl)-L-seryl-[protein] + diphosphate. It carries out the reaction L-tyrosyl-[protein] + UTP = O-(5'-uridylyl)-L-tyrosyl-[protein] + diphosphate. Nucleotidyltransferase involved in the post-translational modification of proteins. It can catalyze the addition of adenosine monophosphate (AMP) or uridine monophosphate (UMP) to a protein, resulting in modifications known as AMPylation and UMPylation. In Yersinia pestis (strain Pestoides F), this protein is Protein nucleotidyltransferase YdiU.